The sequence spans 140 residues: ATP synthase epsilon chain (140 aa).

The protein belongs to the ATPase epsilon chain family. F-type ATPases have 2 components, CF(1) - the catalytic core - and CF(0) - the membrane proton channel. CF(1) has five subunits: alpha(3), beta(3), gamma(1), delta(1), epsilon(1). CF(0) has three main subunits: a, b and c.

The protein localises to the cell inner membrane. Functionally, produces ATP from ADP in the presence of a proton gradient across the membrane. The polypeptide is ATP synthase epsilon chain (Sodalis glossinidius (strain morsitans)).